Consider the following 375-residue polypeptide: tRNA-specific 2-thiouridylase MnmA (375 aa).

Residues 16–23 (GMSGGVDS) and methionine 42 each bind ATP. The tract at residues 102–104 (NPD) is interaction with target base in tRNA. Cysteine 107 acts as the Nucleophile in catalysis. Cysteine 107 and cysteine 203 are joined by a disulfide. Glycine 131 is an ATP binding site. Residues 153 to 155 (KDQ) form an interaction with tRNA region. The active-site Cysteine persulfide intermediate is the cysteine 203. An interaction with tRNA region spans residues 315–316 (RY).

This sequence belongs to the MnmA/TRMU family.

The protein localises to the cytoplasm. It catalyses the reaction S-sulfanyl-L-cysteinyl-[protein] + uridine(34) in tRNA + AH2 + ATP = 2-thiouridine(34) in tRNA + L-cysteinyl-[protein] + A + AMP + diphosphate + H(+). Functionally, catalyzes the 2-thiolation of uridine at the wobble position (U34) of tRNA, leading to the formation of s(2)U34. The chain is tRNA-specific 2-thiouridylase MnmA from Pseudomonas aeruginosa (strain LESB58).